We begin with the raw amino-acid sequence, 79 residues long: MKRARRAAPLPKKRRNMFAQLGIERVDYKDTSTLRQFLSERGKIRSRTVTGLTVQQQRQVTIAVKNAREMALLPYPGQG.

The protein belongs to the bacterial ribosomal protein bS18 family. As to quaternary structure, part of the 30S ribosomal subunit. Forms a tight heterodimer with protein bS6.

Its function is as follows. Binds as a heterodimer with protein bS6 to the central domain of the 16S rRNA, where it helps stabilize the platform of the 30S subunit. The sequence is that of Small ribosomal subunit protein bS18B from Mycolicibacterium gilvum (strain PYR-GCK) (Mycobacterium gilvum (strain PYR-GCK)).